The sequence spans 801 residues: Protocadherin beta-8 (801 aa).

The signal sequence occupies residues 1–29 (MEASGKLICRQRQVLFSFLLLGLSLAGAA). Topologically, residues 30–691 (EPRSYSVVEE…GQADSLTVYL (662 aa)) are extracellular. Cadherin domains lie at 36–134 (VVEE…SPVF), 139–243 (MLVK…APEF), 248–348 (YRVQ…APEV), 353–452 (FTSP…APAF), and 457–562 (YTLF…SPFV). The cysteines at positions 97 and 103 are disulfide-linked. Asn-419 and Asn-437 each carry an N-linked (GlcNAc...) asparagine glycan. Asn-568 carries an N-linked (GlcNAc...) asparagine glycan. Residues 569-672 (GSAPCTELVP…LVDGFSQPYL (104 aa)) form the Cadherin 6 domain. A helical transmembrane segment spans residues 692–710 (VVALASVSSLFLFSVLLFV). The Cytoplasmic segment spans residues 711 to 801 (AVLLCRRSRA…NGFGFSLQLK (91 aa)).

As to quaternary structure, forms homodimers in trans (molecules expressed by two different cells). Forms promiscuous heterodimers in cis (at the plasma membrane of the same cell) with other protocadherins.

The protein localises to the cell membrane. In terms of biological role, calcium-dependent cell-adhesion protein involved in cells self-recognition and non-self discrimination. Thereby, it is involved in the establishment and maintenance of specific neuronal connections in the brain. This chain is Protocadherin beta-8, found in Homo sapiens (Human).